The sequence spans 180 residues: Chromosome-anchoring protein RacA (180 aa).

Residues 5-25 (TPFIAKKLGVSPKAVVRIAQQ) constitute a DNA-binding region (H-T-H motif). The stretch at 89-151 (SHDFEQLTAQ…LEATLKKEEP (63 aa)) forms a coiled coil.

This sequence belongs to the RacA family.

It is found in the cytoplasm. Functionally, required for the formation of axial filaments and for anchoring the origin regions at the cell poles in sporulating cells, thus ensuring proper chromosome segregation in the prespore. Binds in a dispersed manner throughout the chromosome but preferentially to sites clustered in the origin portion of the chromosome, causing condensation of the chromosome and its remodeling into an elongated, anchored structure. The sequence is that of Chromosome-anchoring protein RacA from Bacillus cereus (strain ATCC 10987 / NRS 248).